The sequence spans 125 residues: UPF0231 protein in hemN 3'region (125 aa).

The protein belongs to the UPF0231 family.

This is UPF0231 protein in hemN 3'region from Mannheimia haemolytica (Pasteurella haemolytica).